A 128-amino-acid chain; its full sequence is Sulfurtransferase TusD (128 aa).

The active-site Cysteine persulfide intermediate is the Cys-78.

This sequence belongs to the DsrE/TusD family. Heterohexamer, formed by a dimer of trimers. The hexameric TusBCD complex contains 2 copies each of TusB, TusC and TusD. The TusBCD complex interacts with TusE.

It is found in the cytoplasm. Its function is as follows. Part of a sulfur-relay system required for 2-thiolation of 5-methylaminomethyl-2-thiouridine (mnm(5)s(2)U) at tRNA wobble positions. Accepts sulfur from TusA and transfers it in turn to TusE. This Salmonella newport (strain SL254) protein is Sulfurtransferase TusD.